The primary structure comprises 184 residues: ATP synthase subunit b, chloroplastic (184 aa).

The chain crosses the membrane as a helical span at residues 31–53; that stretch reads LINLSVVLGVLIYFGKGVLSNLL.

The protein belongs to the ATPase B chain family. F-type ATPases have 2 components, F(1) - the catalytic core - and F(0) - the membrane proton channel. F(1) has five subunits: alpha(3), beta(3), gamma(1), delta(1), epsilon(1). F(0) has four main subunits: a(1), b(1), b'(1) and c(10-14). The alpha and beta chains form an alternating ring which encloses part of the gamma chain. F(1) is attached to F(0) by a central stalk formed by the gamma and epsilon chains, while a peripheral stalk is formed by the delta, b and b' chains.

It is found in the plastid. Its subcellular location is the chloroplast thylakoid membrane. Its function is as follows. F(1)F(0) ATP synthase produces ATP from ADP in the presence of a proton or sodium gradient. F-type ATPases consist of two structural domains, F(1) containing the extramembraneous catalytic core and F(0) containing the membrane proton channel, linked together by a central stalk and a peripheral stalk. During catalysis, ATP synthesis in the catalytic domain of F(1) is coupled via a rotary mechanism of the central stalk subunits to proton translocation. Functionally, component of the F(0) channel, it forms part of the peripheral stalk, linking F(1) to F(0). In Cycas taitungensis (Prince sago), this protein is ATP synthase subunit b, chloroplastic.